A 164-amino-acid polypeptide reads, in one-letter code: Microfibrillar-associated protein 5 (164 aa).

A signal peptide spans 1 to 28 (MLFLGQKALLLVLAISIPSDWLPLGVSG). Positions 30-32 (RGD) match the Cell attachment site motif. Asn-70 carries an N-linked (GlcNAc...) asparagine glycan.

It belongs to the MFAP family. In terms of assembly, interacts with TGFB2. Interacts with BMP2. Interacts with FBN1 (via N-terminal domain) and FBN2. In terms of processing, forms intermolecular disulfide bonds either with other MAGP-2 molecules or with other components of the microfibrils.

The protein resides in the secreted. It localises to the extracellular space. The protein localises to the extracellular matrix. Functionally, may play a role in hematopoiesis. In the cardiovascular system, could regulate growth factors or participate in cell signaling in maintaining large vessel integrity. Component of the elastin-associated microfibrils. This is Microfibrillar-associated protein 5 (Mfap5) from Mus musculus (Mouse).